Consider the following 678-residue polypeptide: Transcriptional regulator CRZ1 (678 aa).

Residues 1–21 (MSFSNGNMASYMTSSNGEEQS) are compositionally biased toward polar residues. Disordered stretches follow at residues 1-50 (MSFS…SHTF) and 159-195 (TPADNQHRPSLTNQFLSPRSNYDGTTRSSGIDSNYSD). A compositionally biased stretch (low complexity) spans 34 to 47 (YRRNNFRNSSNSGS). A compositionally biased stretch (polar residues) spans 166–195 (RPSLTNQFLSPRSNYDGTTRSSGIDSNYSD). Position 170 is a phosphothreonine (threonine 170). Phosphoserine occurs at positions 175, 245, and 385. Residues 401–486 (KLKKSRRRSS…SNFNEDNNNN (86 aa)) are disordered. Residues 410-428 (SQTSNNSFTSRRSSRSRSI) show a composition bias toward low complexity. Composition is skewed to basic and acidic residues over residues 429-446 (SPDEKAKSISANREKLLE) and 457-467 (DNNRERYDNDS). The segment covering 472-486 (NTINSSNFNEDNNNN) has biased composition (low complexity). C2H2-type zinc fingers lie at residues 569–591 (FACDVCGKKFTRPYNLKSHLRTH) and 597–619 (FICSICGKAFARQHDRKRHEDLH).

Post-translationally, phosphorylated. Dephosphorylated by calcineurin which leads to rapid translocation from the cytoplasm to the nucleus. Phosphorylated by the cyclin-CDK PHO80-PHO85.

It is found in the nucleus. The protein localises to the cytoplasm. In terms of biological role, involved in the regulation of calcium ion homeostasis. Binds to the calcineurin-dependent response element. Transcriptionally regulates PMC1, PMR1, PMR2A and FKS2. The sequence is that of Transcriptional regulator CRZ1 (CRZ1) from Saccharomyces cerevisiae (strain ATCC 204508 / S288c) (Baker's yeast).